We begin with the raw amino-acid sequence, 400 residues long: DNA primase small subunit PriS (400 aa).

Residues Asp98, Asp100, and Asp306 contribute to the active site.

Belongs to the eukaryotic-type primase small subunit family. Heterodimer of a small subunit (PriS) and a large subunit (PriL). It depends on Mg(2+) as a cofactor. Mn(2+) serves as cofactor.

In terms of biological role, catalytic subunit of DNA primase, an RNA polymerase that catalyzes the synthesis of short RNA molecules used as primers for DNA polymerase during DNA replication. The small subunit contains the primase catalytic core and has DNA synthesis activity on its own. Binding to the large subunit stabilizes and modulates the activity, increasing the rate of DNA synthesis while decreasing the length of the DNA fragments, and conferring RNA synthesis capability. The DNA polymerase activity may enable DNA primase to also catalyze primer extension after primer synthesis. May also play a role in DNA repair. The sequence is that of DNA primase small subunit PriS from Methanocella arvoryzae (strain DSM 22066 / NBRC 105507 / MRE50).